The sequence spans 157 residues: Protein Smg homolog (157 aa).

It belongs to the Smg family.

The chain is Protein Smg homolog from Idiomarina loihiensis (strain ATCC BAA-735 / DSM 15497 / L2-TR).